The primary structure comprises 72 residues: Prokaryotic ubiquitin-like protein Pup (72 aa).

Over residues M1–Q10 the composition is skewed to gly residues. The interval M1 to D45 is disordered. Positions G9–E60 form a coiled coil. An ARC ATPase binding region spans residues Q28–F66. Residues E31 to D42 are compositionally biased toward basic and acidic residues. Residue E72 forms an Isoglutamyl lysine isopeptide (Glu-Lys) (interchain with K-? in acceptor proteins) linkage.

Belongs to the prokaryotic ubiquitin-like protein family. Strongly interacts with the proteasome-associated ATPase ARC through a hydrophobic interface; the interacting region of Pup lies in its C-terminal half. There is one Pup binding site per ARC hexamer ring.

It participates in protein degradation; proteasomal Pup-dependent pathway. Functionally, protein modifier that is covalently attached to lysine residues of substrate proteins, thereby targeting them for proteasomal degradation. The tagging system is termed pupylation. The sequence is that of Prokaryotic ubiquitin-like protein Pup from Streptomyces avermitilis (strain ATCC 31267 / DSM 46492 / JCM 5070 / NBRC 14893 / NCIMB 12804 / NRRL 8165 / MA-4680).